The chain runs to 580 residues: MKMLVEKIEKKFDQEKVIEEFEDLTKDAGKIQEETLKKILEQNGGTEYLQLWGLNGRTDPQTFKNCVPIVTHNDLEPYIQRIADGDLSPILTGKPIETISLSSGTTQGKPKFVPFNDELMESTMQIFKTSFAFRNREFPIGNGKALQFIYSSKQFKTKGGLAAGTATTNVYRNAQFKKTMKAMCTPCCSPDEVIFGPDFHQSLYCHLLCGLIFHDEVQVVSSTFAHSIVHAFRTFEQVWEALVVDIREGVLSSRVTVPSIRLAMSKLLKPDPELADTIYNKCSRLSNWYGLIPDLFPNTRYIYGIMTGSMEPYLKKLRHYAGELPLLSADYGSSEGWVGVNVNPKLPPELVTYAVLPNIGYFEFIPLGGNLNGIEQANSPVGLTEVKLGEEYEVVFTNFAGLYRYRLGDVVKVKGFHNGTPELQFVCRSNLLLSINIDKNTEKDLQLAVEAAAKRLVDEKLEVVDFTSHVNVSADPGHYVIFWELSGEATDEMLQDCCNCLDRSFIDAGYVSSRKVNAIGALELRIVKRGTFHKILDHFVGLGGAVSQFKTPRCVGPKNSSLLQILSSNVVETYVSTAFC.

Residue serine 100 coordinates ATP. Serine 103 serves as a coordination point for jasmonate. Residues methionine 120, threonine 123, glycine 164, asparagine 169, and 332–337 each bind ATP; that span reads GSSEGW. Position 167–171 (167–171) interacts with an L-alpha-amino acid; that stretch reads TTNVY. 329–332 contributes to the jasmonate binding site; the sequence is ADYG. 534–538 contacts an L-alpha-amino acid; the sequence is KILDH.

The protein belongs to the IAA-amido conjugating enzyme family.

It catalyses the reaction a jasmonate + an L-alpha-amino acid + ATP = a jasmonyl-L-amino acid + AMP + diphosphate + H(+). Its function is as follows. Catalyzes the synthesis of jasmonate-amino acid conjugates by adenylation. Catalyzes the conjugation of jasmonate (JA) to Ile, Leu and Val. Catalyzes the conjugation of JA to Ile that may mediate defense signaling and resistance to the herbivore Manduca sexta caterpillars. This Nicotiana attenuata (Coyote tobacco) protein is Jasmonoyl--L-amino acid synthetase JAR6 (JAR6).